Consider the following 53-residue polypeptide: UPF0391 membrane protein Bmul_5473/BMULJ_06024 (53 aa).

Transmembrane regions (helical) follow at residues 5 to 25 (ALIF…GIAA) and 30 to 50 (IAKI…LLGV).

The protein belongs to the UPF0391 family.

It is found in the cell membrane. This is UPF0391 membrane protein Bmul_5473/BMULJ_06024 from Burkholderia multivorans (strain ATCC 17616 / 249).